A 249-amino-acid chain; its full sequence is UPF0309 protein GTNG_1302 (249 aa).

Residues 31-214 enclose the SIS domain; sequence VSKAVQNGGI…ALMAENGVEP (184 aa).

The protein belongs to the UPF0309 family.

This chain is UPF0309 protein GTNG_1302, found in Geobacillus thermodenitrificans (strain NG80-2).